We begin with the raw amino-acid sequence, 305 residues long: UDP-3-O-acyl-N-acetylglucosamine deacetylase (305 aa).

Zn(2+) contacts are provided by histidine 79, histidine 238, and aspartate 242. Histidine 265 acts as the Proton donor in catalysis.

This sequence belongs to the LpxC family. Zn(2+) serves as cofactor.

It catalyses the reaction a UDP-3-O-[(3R)-3-hydroxyacyl]-N-acetyl-alpha-D-glucosamine + H2O = a UDP-3-O-[(3R)-3-hydroxyacyl]-alpha-D-glucosamine + acetate. It functions in the pathway glycolipid biosynthesis; lipid IV(A) biosynthesis; lipid IV(A) from (3R)-3-hydroxytetradecanoyl-[acyl-carrier-protein] and UDP-N-acetyl-alpha-D-glucosamine: step 2/6. Catalyzes the hydrolysis of UDP-3-O-myristoyl-N-acetylglucosamine to form UDP-3-O-myristoylglucosamine and acetate, the committed step in lipid A biosynthesis. The sequence is that of UDP-3-O-acyl-N-acetylglucosamine deacetylase from Aliivibrio fischeri (strain ATCC 700601 / ES114) (Vibrio fischeri).